Here is a 311-residue protein sequence, read N- to C-terminus: Beta-ketoacyl-[acyl-carrier-protein] synthase III (311 aa).

Residues Cys114 and His238 contribute to the active site. An ACP-binding region spans residues 239 to 243; that stretch reads QANIR. Asn268 is a catalytic residue.

The protein belongs to the thiolase-like superfamily. FabH family. In terms of assembly, homodimer.

The protein localises to the cytoplasm. The catalysed reaction is malonyl-[ACP] + acetyl-CoA + H(+) = 3-oxobutanoyl-[ACP] + CO2 + CoA. It functions in the pathway lipid metabolism; fatty acid biosynthesis. In terms of biological role, catalyzes the condensation reaction of fatty acid synthesis by the addition to an acyl acceptor of two carbons from malonyl-ACP. Catalyzes the first condensation reaction which initiates fatty acid synthesis and may therefore play a role in governing the total rate of fatty acid production. Possesses both acetoacetyl-ACP synthase and acetyl transacylase activities. Its substrate specificity determines the biosynthesis of branched-chain and/or straight-chain of fatty acids. This Neorickettsia sennetsu (strain ATCC VR-367 / Miyayama) (Ehrlichia sennetsu) protein is Beta-ketoacyl-[acyl-carrier-protein] synthase III.